A 431-amino-acid chain; its full sequence is Metal-binding activator 1 (431 aa).

Positions Met-1–Gly-40 form a DNA-binding region, copper-fist. Cys-11, Cys-14, Cys-23, and His-25 together coordinate Zn(2+).

The protein localises to the nucleus. Its function is as follows. Copper ion-sensing transcription factor which activates transcription of the CTR1 copper transporter under low-copper conditions. Promotes filamentous and invasive growth. This chain is Metal-binding activator 1 (MAC1), found in Candida albicans (strain SC5314 / ATCC MYA-2876) (Yeast).